Consider the following 362-residue polypeptide: Phosphoserine aminotransferase (362 aa).

Serine 9 and arginine 42 together coordinate L-glutamate. Pyridoxal 5'-phosphate is bound by residues 76–77 (GR), tryptophan 102, threonine 153, aspartate 174, and glutamine 197. The residue at position 198 (lysine 198) is an N6-(pyridoxal phosphate)lysine. 239 to 240 (NT) serves as a coordination point for pyridoxal 5'-phosphate.

Belongs to the class-V pyridoxal-phosphate-dependent aminotransferase family. SerC subfamily. As to quaternary structure, homodimer. It depends on pyridoxal 5'-phosphate as a cofactor.

It localises to the cytoplasm. The catalysed reaction is O-phospho-L-serine + 2-oxoglutarate = 3-phosphooxypyruvate + L-glutamate. It carries out the reaction 4-(phosphooxy)-L-threonine + 2-oxoglutarate = (R)-3-hydroxy-2-oxo-4-phosphooxybutanoate + L-glutamate. Its pathway is amino-acid biosynthesis; L-serine biosynthesis; L-serine from 3-phospho-D-glycerate: step 2/3. It functions in the pathway cofactor biosynthesis; pyridoxine 5'-phosphate biosynthesis; pyridoxine 5'-phosphate from D-erythrose 4-phosphate: step 3/5. Catalyzes the reversible conversion of 3-phosphohydroxypyruvate to phosphoserine and of 3-hydroxy-2-oxo-4-phosphonooxybutanoate to phosphohydroxythreonine. Is involved in both pyridoxine and serine biosynthesis. This is Phosphoserine aminotransferase (serC) from Escherichia coli (strain K12).